A 378-amino-acid chain; its full sequence is MCSPLPLLILRLLLLTHPSLGRHLRHRESRKIHSVVVSTWNYTDANLQAWSVLKQGPRRTRQAVIQGCLACQNLRCGRLLGGSYGPDERGNLSLEAAIMDGRNQKFGAVAGMEGIRNAILVAEAVLQHTHHSLLVGKGATDFARVMGYKEEHAVNLNTKNVIGNWTFARCQPNFWRDVVPPPRTQCGPYSPLPQYLLQRPMRQEYPITQGEHDQLAFLALDSEGLIHVASYSSGARFRLRGRVGDSAVPGAGIYADNEVGGAIASGDGDVLMHHLPAFLAVEAMRAGQSPAKAAAKVIQRVLKHNTEFNGAVIAVNRWGTYAAACAGMDEFHFVVSGGKGFLRMARVERVKCQDRKDVVDGGPKGFFTRKPMKNRKIE.

The first 21 residues, 1–21 (MCSPLPLLILRLLLLTHPSLG), serve as a signal peptide directing secretion. 3 disulfide bridges follow: Cys-71–Cys-76, Cys-170–Cys-186, and Cys-325–Cys-352.

Belongs to the Ntn-hydrolase family.

The protein is L-asparaginase-like protein GF11609 of Drosophila ananassae (Fruit fly).